The chain runs to 418 residues: ORC1-type DNA replication protein 2 (418 aa).

ATP contacts are provided by residues 72-76 (TGKTV), tyrosine 218, and arginine 230.

It belongs to the CDC6/cdc18 family.

Functionally, involved in regulation of DNA replication. This chain is ORC1-type DNA replication protein 2 (cdc6-2), found in Sulfurisphaera tokodaii (strain DSM 16993 / JCM 10545 / NBRC 100140 / 7) (Sulfolobus tokodaii).